Reading from the N-terminus, the 474-residue chain is Photosystem II CP43 reaction center protein (474 aa).

A propeptide spanning residues 1-14 is cleaved from the precursor; the sequence is MKTLYSLRRFYPVE. Thr15 carries the N-acetylthreonine modification. A Phosphothreonine modification is found at Thr15. 5 helical membrane-spanning segments follow: residues 69–93, 134–155, 178–201, 256–276, and 292–313; these read LFEV…PHLA, LLGP…KDRN, KALY…RKIT, KPFA…LSYS, and WFNN…ASQA. Glu368 contacts [CaMn4O5] cluster. A helical transmembrane segment spans residues 448–472; it reads RARAAAAGFEKGIDRDFEPVLSMTP.

Belongs to the PsbB/PsbC family. PsbC subfamily. In terms of assembly, PSII is composed of 1 copy each of membrane proteins PsbA, PsbB, PsbC, PsbD, PsbE, PsbF, PsbH, PsbI, PsbJ, PsbK, PsbL, PsbM, PsbT, PsbX, PsbY, PsbZ, Psb30/Ycf12, at least 3 peripheral proteins of the oxygen-evolving complex and a large number of cofactors. It forms dimeric complexes. It depends on Binds multiple chlorophylls and provides some of the ligands for the Ca-4Mn-5O cluster of the oxygen-evolving complex. It may also provide a ligand for a Cl- that is required for oxygen evolution. PSII binds additional chlorophylls, carotenoids and specific lipids. as a cofactor.

The protein resides in the plastid. It localises to the chloroplast thylakoid membrane. One of the components of the core complex of photosystem II (PSII). It binds chlorophyll and helps catalyze the primary light-induced photochemical processes of PSII. PSII is a light-driven water:plastoquinone oxidoreductase, using light energy to abstract electrons from H(2)O, generating O(2) and a proton gradient subsequently used for ATP formation. This chain is Photosystem II CP43 reaction center protein, found in Citrus sinensis (Sweet orange).